Here is a 167-residue protein sequence, read N- to C-terminus: Transcription factor E (167 aa).

Residues 8–90 (NDKVIRGYLI…LWHLDFSDVE (83 aa)) enclose the HTH TFE/IIEalpha-type domain.

The protein belongs to the TFE family. Monomer. Interaction with RNA polymerase subunits RpoF and RpoE is necessary for Tfe stimulatory transcription activity. Able to interact with Tbp and RNA polymerase in the absence of DNA promoter. Interacts both with the preinitiation and elongation complexes.

Functionally, transcription factor that plays a role in the activation of archaeal genes transcribed by RNA polymerase. Facilitates transcription initiation by enhancing TATA-box recognition by TATA-box-binding protein (Tbp), and transcription factor B (Tfb) and RNA polymerase recruitment. Not absolutely required for transcription in vitro, but particularly important in cases where Tbp or Tfb function is not optimal. It dynamically alters the nucleic acid-binding properties of RNA polymerases by stabilizing the initiation complex and destabilizing elongation complexes. Seems to translocate with the RNA polymerase following initiation and acts by binding to the non template strand of the transcription bubble in elongation complexes. This is Transcription factor E from Methanosarcina acetivorans (strain ATCC 35395 / DSM 2834 / JCM 12185 / C2A).